The following is a 414-amino-acid chain: S-adenosylmethionine synthase (414 aa).

H11 serves as a coordination point for ATP. D13 lines the Mg(2+) pocket. Position 39 (E39) interacts with K(+). Residues E52 and Q95 each coordinate L-methionine. Residues 95–105 form a flexible loop region; that stretch reads QSPDIAQGVNL. ATP contacts are provided by residues 169–171, 245–246, D254, 260–261, A277, and K281; these read DGK, KF, and RK. D254 contributes to the L-methionine binding site. K285 is an L-methionine binding site.

Belongs to the AdoMet synthase family. In terms of assembly, homotetramer; dimer of dimers. Mg(2+) serves as cofactor. Requires K(+) as cofactor.

It localises to the cytoplasm. It catalyses the reaction L-methionine + ATP + H2O = S-adenosyl-L-methionine + phosphate + diphosphate. Its pathway is amino-acid biosynthesis; S-adenosyl-L-methionine biosynthesis; S-adenosyl-L-methionine from L-methionine: step 1/1. Functionally, catalyzes the formation of S-adenosylmethionine (AdoMet) from methionine and ATP. The overall synthetic reaction is composed of two sequential steps, AdoMet formation and the subsequent tripolyphosphate hydrolysis which occurs prior to release of AdoMet from the enzyme. In Synechococcus sp. (strain JA-3-3Ab) (Cyanobacteria bacterium Yellowstone A-Prime), this protein is S-adenosylmethionine synthase.